The following is an 88-amino-acid chain: Small ribosomal subunit protein bS16 (88 aa).

Belongs to the bacterial ribosomal protein bS16 family.

The chain is Small ribosomal subunit protein bS16 from Geobacter sp. (strain M21).